The following is a 166-amino-acid chain: Ureidoglycolate lyase (166 aa).

This sequence belongs to the ureidoglycolate lyase family. In terms of assembly, homodimer. Requires Ni(2+) as cofactor.

It carries out the reaction (S)-ureidoglycolate = urea + glyoxylate. It participates in nitrogen metabolism; (S)-allantoin degradation. Functionally, catalyzes the catabolism of the allantoin degradation intermediate (S)-ureidoglycolate, generating urea and glyoxylate. Involved in the utilization of allantoin as nitrogen source. The polypeptide is Ureidoglycolate lyase (Rhizobium etli (strain ATCC 51251 / DSM 11541 / JCM 21823 / NBRC 15573 / CFN 42)).